The following is a 578-amino-acid chain: Signal peptide peptidase-like 2B (578 aa).

A signal peptide spans 1-19 (MAAARLAAALLLLAAQVAC). Over 20 to 168 (EFGVLRVVSQ…APSEPVMDYN (149 aa)) the chain is Lumenal. In terms of domain architecture, PA spans 61–145 (LRDLSTTQLC…LLSHRDLQDI (85 aa)). 2 N-linked (GlcNAc...) asparagine glycosylation sites follow: asparagine 91 and asparagine 123. A helical membrane pass occupies residues 169–189 (MVIIFVMAVGTVAIGGYWAGS). Over 190–216 (HDVKKYMKHKRDDGPEKQEDEAVDVTP) the chain is Cytoplasmic. A helical membrane pass occupies residues 217–237 (VMICVFVVMCCFMLVLLYYFY). At 238–239 (DR) the chain is on the lumenal side. A helical transmembrane segment spans residues 240 to 260 (LVYVIIGIFCLASSTGLYSCL). The Cytoplasmic segment spans residues 261-286 (APFVRKLPFCTCRVPDNNLPYFHKRP). Residues 287 to 307 (QARMLLLALFCVTVSVVWGIF) form a helical membrane-spanning segment. Residues 308–312 (RNEDQ) lie on the Lumenal side of the membrane. Residues 313–333 (WAWVLQDTLGIAFCLYMLKTI) traverse the membrane as a helical segment. Topologically, residues 334–341 (RLPTFKAC) are cytoplasmic. A helical transmembrane segment spans residues 342–362 (TLLLLVLFIYDIFFVFITPFL). Residue aspartate 352 is part of the active site. The Lumenal portion of the chain corresponds to 363-405 (TKSGNSIMVEVATGPSNSSTHEKLPMVLKVPRLNTSPLSLCDR). Residues 406-426 (PFSLLGFGDILVPGLLVAYCH) form a helical membrane-spanning segment. The active site involves aspartate 414. Topologically, residues 427-438 (RFDIQVQSSRIY) are cytoplasmic. The chain crosses the membrane as a helical span at residues 439 to 459 (FVACTIAYGLGLLVTFVALVL). Topologically, residues 460 to 463 (MQRG) are lumenal. Residues 464-484 (QPALLYLVPCTLLTSCTVALW) form a helical membrane-spanning segment. Positions 465–467 (PAL) match the PAL motif. At 485–578 (RRELGAFWTG…IPVVKPETSA (94 aa)) the chain is on the cytoplasmic side. Residues 502 to 578 (PQTPWAATQG…IPVVKPETSA (77 aa)) are disordered. Residues 520–529 (SSLSEQPPSE) are compositionally biased toward low complexity.

It belongs to the peptidase A22B family. Monomer. Homodimer. Interacts with ITM2B and TNF. Post-translationally, glycosylated.

The protein localises to the cell membrane. It is found in the golgi apparatus membrane. Its subcellular location is the lysosome membrane. The protein resides in the endosome membrane. It localises to the membrane. In terms of biological role, intramembrane-cleaving aspartic protease (I-CLiP) that cleaves type II membrane signal peptides in the hydrophobic plane of the membrane. Functions in ITM2B and TNF processing. Catalyzes the intramembrane cleavage of the anchored fragment of shed TNF-alpha (TNF), which promotes the release of the intracellular domain (ICD) for signaling to the nucleus. May play a role in the regulation of innate and adaptive immunity. This is Signal peptide peptidase-like 2B from Mus musculus (Mouse).